The following is a 227-amino-acid chain: 2,3-bisphosphoglycerate-dependent phosphoglycerate mutase (227 aa).

Residues 8–15 (RHGQSIWN), 21–22 (TG), Arg-58, 110–113 (ERYY), Lys-121, 137–138 (RR), and 181–182 (GN) contribute to the substrate site. His-9 (tele-phosphohistidine intermediate) is an active-site residue. Glu-110 functions as the Proton donor/acceptor in the catalytic mechanism.

The protein belongs to the phosphoglycerate mutase family. BPG-dependent PGAM subfamily. Homodimer.

The catalysed reaction is (2R)-2-phosphoglycerate = (2R)-3-phosphoglycerate. It functions in the pathway carbohydrate degradation; glycolysis; pyruvate from D-glyceraldehyde 3-phosphate: step 3/5. Catalyzes the interconversion of 2-phosphoglycerate and 3-phosphoglycerate. In Pseudoalteromonas atlantica (strain T6c / ATCC BAA-1087), this protein is 2,3-bisphosphoglycerate-dependent phosphoglycerate mutase.